A 408-amino-acid chain; its full sequence is Intracellular coagulation inhibitor 2 (408 aa).

The first 22 residues, 1 to 22 (MLSRRTLDCCLVMLIVSTTFCQ), serve as a signal peptide directing secretion. The cysteines at positions 50 and 249 are disulfide-linked. A glycan (N-linked (GlcNAc...) asparagine) is linked at Asn174.

It belongs to the serpin family. Monomer. Forms a covalent heterodimer with clotting factor C chain B. Forms a covalent heterodimer with proclotting enzyme heavy chain. In terms of tissue distribution, specifically expressed in hemocytes (at protein level).

It is found in the secreted. Functionally, serine protease inhibitor that inhibits proclotting enzyme and to a lesser extent clotting factor C and clotting factor G. The protein is Intracellular coagulation inhibitor 2 of Tachypleus tridentatus (Japanese horseshoe crab).